Reading from the N-terminus, the 96-residue chain is Co-chaperonin GroES (96 aa).

This sequence belongs to the GroES chaperonin family. In terms of assembly, heptamer of 7 subunits arranged in a ring. Interacts with the chaperonin GroEL.

It localises to the cytoplasm. Functionally, together with the chaperonin GroEL, plays an essential role in assisting protein folding. The GroEL-GroES system forms a nano-cage that allows encapsulation of the non-native substrate proteins and provides a physical environment optimized to promote and accelerate protein folding. GroES binds to the apical surface of the GroEL ring, thereby capping the opening of the GroEL channel. This chain is Co-chaperonin GroES, found in Alteromonas mediterranea (strain DSM 17117 / CIP 110805 / LMG 28347 / Deep ecotype).